A 498-amino-acid polypeptide reads, in one-letter code: Probable global transactivator (498 aa).

The Helicase ATP-binding domain occupies Arg-43–Arg-206. Ala-55–Thr-63 contacts ATP. Positions Asp-157–His-160 match the DEAH box motif. Residues Glu-337–Lys-493 enclose the Helicase C-terminal domain.

It belongs to the SNF2/RAD54 helicase family.

This chain is Probable global transactivator (GTA), found in Orgyia pseudotsugata (Douglas-fir tussock moth).